The following is a 961-amino-acid chain: Transcription factor MYB3R-4 (961 aa).

The interval 1–33 is disordered; that stretch reads MEAESSTPQERIPKLRHGRTSGPARRSTRGQWT. 3 HTH myb-type domains span residues 24–75, 76–131, and 132–182; these read ARRS…QKVL, NPEL…NPAI, and NKEA…KKKL. DNA-binding regions (H-T-H motif) lie at residues 52–75, 104–127, and 155–178; these read WKKI…QKVL, WSTI…HNHL, and WAEL…HSSV. 2 disordered regions span residues 390–457 and 534–555; these read GHSV…LIIS and RPHS…EDMG. 2 stretches are compositionally biased toward polar residues: residues 391–405 and 416–430; these read HSVS…NEFN and SSAS…TKSP. Low complexity predominate over residues 431 to 444; sequence TQSSSSRFTATAAS. Basic and acidic residues predominate over residues 534–554; it reads RPHSLPKHEPNMTNEQHHEDM. Positions 612–619 match the Nuclear localization signal motif; it reads GKKTLVGA. A disordered region spans residues 756–781; the sequence is NTGKPVLSTPGQSVTKAEKAQVSTPR. Over residues 764-781 the composition is skewed to polar residues; that stretch reads TPGQSVTKAEKAQVSTPR.

In terms of assembly, component of a DREAM-like complex which modulates a variety of developmentally regulated genes and of the mitotic genes in proliferating and differentiated cells. Associates with CDKA-1, RBR1 and E2FB, but not with E2FC, in proliferating cells, at early stages of leaves development. Expressed in roots, cotyledons and leaves, especially in vascular tissues, and in flowers.

The protein localises to the nucleus. In terms of biological role, transcription factor that binds 5'-AACGG-3' motifs in gene promoters. Involved in the regulation of cytokinesis, probably via the activation of several G2/M phase-specific genes transcription (e.g. KNOLLE). Required for the maintenance of diploidy. Functionally, involved in transcription regulation during induced endoreduplication at the powdery mildew (e.g. G.orontii) infection site, thus promoting G.orontii growth and reproduction. In Arabidopsis thaliana (Mouse-ear cress), this protein is Transcription factor MYB3R-4.